We begin with the raw amino-acid sequence, 252 residues long: MSLLTEVETYVLSIVPSGPLKAEIAQRLEDVFAGKNTDLEALMEWLKTRPILSPLTKGILGFVFTLTCPSERGLQRRRFVQNALNGNGDPNNMDKAVKLYRKLKREITFHGAKEVALSYSAGALASCMGLIYNRMGTVTTEVAFGLVCATCEQIADSQHRSHRQMVTTTNPLIRHENRMVLASTTAKAMEQMAGSSEQAAEAMEVASQARQMVQAMRTIGTHPSSSAGLKDDLLENLQAYQKRMGVQMQRFK.

Residues 1–164 are membrane-binding; sequence MSLLTEVETY…ADSQHRSHRQ (164 aa). Residues 101–105 carry the Nuclear localization signal motif; the sequence is RKLKR. The tract at residues 165-252 is RNP-binding; it reads MVTTTNPLIR…RMGVQMQRFK (88 aa).

The protein belongs to the influenza viruses Matrix protein M1 family. In terms of assembly, homodimer and homomultimer. Interacts with NEP. Binds ribonucleocapsid by both interacting with genomic RNA and NP protein. May interact with HA and NA. Cannot bind NP without genomic RNA.

Its subcellular location is the virion membrane. It localises to the host nucleus. In terms of biological role, plays critical roles in virus replication, from virus entry and uncoating to assembly and budding of the virus particle. M1 binding to ribonucleocapsids (RNPs) in nucleus seems to inhibit viral transcription. Interaction of viral NEP with M1-RNP is thought to promote nuclear export of the complex, which is targeted to the virion assembly site at the apical plasma membrane in polarized epithelial cells. Interactions with NA and HA may bring M1, a non-raft-associated protein, into lipid rafts. Forms a continuous shell on the inner side of the lipid bilayer in virion, where it binds the RNP. During virus entry into cell, the M2 ion channel acidifies the internal virion core, inducing M1 dissociation from the RNP. M1-free RNPs are transported to the nucleus, where viral transcription and replication can take place. Functionally, determines the virion's shape: spherical or filamentous. Clinical isolates of influenza are characterized by the presence of significant proportion of filamentous virions, whereas after multiple passage on eggs or cell culture, virions have only spherical morphology. Filamentous virions are thought to be important to infect neighboring cells, and spherical virions more suited to spread through aerosol between hosts organisms. This Influenza A virus (strain A/Swine/Wisconsin/1/1961 H1N1) protein is Matrix protein 1.